We begin with the raw amino-acid sequence, 729 residues long: Pentatricopeptide repeat-containing protein At4g04370 (729 aa).

PPR repeat units follow at residues 10–44 (STKY…KLLP), 45–79 (DTFT…GFSS), 80–110 (DFYI…MRER), 111–145 (DVVH…GIKP), 178–208 (DIAV…MEQR), 209–243 (DMVS…GLRP), 244–278 (DQQT…GFDV), 279–309 (DMHL…IPNK), 310–344 (DVVC…GSDL), 345–379 (SSEA…GYTL), 380–414 (DTPA…DLVS), 415–445 (WNAI…TVQQ), 447–481 (DSFT…FIRP), 482–512 (CSLV…ISWK), 513–547 (DVVS…GMEP), 548–583 (NHVI…GVEP), and 584–618 (NHEH…PSID). Residues 619–694 (VLGIILDACR…LPGWSKIEMN (76 aa)) are type E motif. A type E(+) motif region spans residues 695–723 (GKTTTFFMNHTSHSDDTVSLLKLLSREMM).

It belongs to the PPR family. PCMP-E subfamily.

This Arabidopsis thaliana (Mouse-ear cress) protein is Pentatricopeptide repeat-containing protein At4g04370 (PCMP-E99).